The sequence spans 431 residues: Probable indole-3-pyruvate monooxygenase YUCCA7 (431 aa).

36–41 contacts FAD; sequence GAGPSG. 207–212 provides a ligand contact to NADP(+); sequence GCGNSG.

It belongs to the FMO family. The cofactor is FAD. Expressed in shoot apex regions and siliques, and at high levels in roots. Detected in flowers, stems and leaves.

The catalysed reaction is indole-3-pyruvate + NADPH + O2 + H(+) = (indol-3-yl)acetate + CO2 + NADP(+) + H2O. The protein operates within plant hormone metabolism; auxin biosynthesis. Functionally, involved in auxin biosynthesis. Belongs to the set of redundant YUCCA genes probably responsible for auxin biosynthesis in roots. This Arabidopsis thaliana (Mouse-ear cress) protein is Probable indole-3-pyruvate monooxygenase YUCCA7 (YUC7).